A 227-amino-acid polypeptide reads, in one-letter code: ATP-dependent dethiobiotin synthetase BioD (227 aa).

12 to 17 (DVGKTV) lines the ATP pocket. Threonine 16 lines the Mg(2+) pocket. Lysine 37 is a catalytic residue. Threonine 41 lines the substrate pocket. Residues aspartate 50, 110–113 (EGAG), 171–172 (GS), and 201–203 (PAG) contribute to the ATP site. Positions 50 and 110 each coordinate Mg(2+).

It belongs to the dethiobiotin synthetase family. Homodimer. Requires Mg(2+) as cofactor.

The protein resides in the cytoplasm. It carries out the reaction (7R,8S)-7,8-diammoniononanoate + CO2 + ATP = (4R,5S)-dethiobiotin + ADP + phosphate + 3 H(+). It functions in the pathway cofactor biosynthesis; biotin biosynthesis; biotin from 7,8-diaminononanoate: step 1/2. Catalyzes a mechanistically unusual reaction, the ATP-dependent insertion of CO2 between the N7 and N8 nitrogen atoms of 7,8-diaminopelargonic acid (DAPA, also called 7,8-diammoniononanoate) to form a ureido ring. The protein is ATP-dependent dethiobiotin synthetase BioD of Rhodococcus erythropolis (strain PR4 / NBRC 100887).